We begin with the raw amino-acid sequence, 300 residues long: Probable alpha-L-glutamate ligase (300 aa).

The ATP-grasp domain occupies 104–287; the sequence is LQLLARQGID…IAGRMIEYIE (184 aa). Residues K141, 178-179, D187, and 211-213 contribute to the ATP site; these read EY and RSN. Residues D248, E260, and N262 each contribute to the Mg(2+) site. Positions 248, 260, and 262 each coordinate Mn(2+).

Belongs to the RimK family. Mg(2+) serves as cofactor. The cofactor is Mn(2+).

The sequence is that of Probable alpha-L-glutamate ligase from Serratia proteamaculans (strain 568).